A 481-amino-acid chain; its full sequence is Glycogen synthase (481 aa).

Position 15 (K15) interacts with ADP-alpha-D-glucose.

Belongs to the glycosyltransferase 1 family. Bacterial/plant glycogen synthase subfamily.

The catalysed reaction is [(1-&gt;4)-alpha-D-glucosyl](n) + ADP-alpha-D-glucose = [(1-&gt;4)-alpha-D-glucosyl](n+1) + ADP + H(+). Its pathway is glycan biosynthesis; glycogen biosynthesis. In terms of biological role, synthesizes alpha-1,4-glucan chains using ADP-glucose. This is Glycogen synthase from Mesorhizobium japonicum (strain LMG 29417 / CECT 9101 / MAFF 303099) (Mesorhizobium loti (strain MAFF 303099)).